Consider the following 605-residue polypeptide: Golgi-associated RAB2 interactor protein 3 (605 aa).

Disordered regions lie at residues 234–265 (GEGI…AART) and 407–529 (YMSE…ALQK). The span at 239 to 265 (HASHGTASAASPSTSTPGAAEGGAART) shows a compositional bias: low complexity. Over residues 434-457 (KKDRHPSRKSSHHRKAGESHRRRA) the composition is skewed to basic residues. Positions 441–458 (RKSSHHRKAGESHRRRAG) match the Bipartite nuclear localization signal motif. The span at 463–473 (KASSHRSASGH) shows a compositional bias: polar residues. Residues 475-484 (NTRDDKKEKG) are compositionally biased toward basic and acidic residues. The span at 489–500 (RGKRHGSSRKSS) shows a compositional bias: basic residues. Residues 513–526 (QELGKNQSASSTGA) show a composition bias toward polar residues. At serine 592 the chain carries Phosphoserine.

It belongs to the GARIN family. As to quaternary structure, interacts (via N-terminus) with RAB2B (in GTP-bound form). Interacts with FRG1. As to expression, expressed in adult spermatocytes and spermatids (at protein level).

It is found in the golgi apparatus. It localises to the nucleus. Its subcellular location is the cajal body. Functionally, may be involved in RNA biogenesis. The protein is Golgi-associated RAB2 interactor protein 3 of Homo sapiens (Human).